Consider the following 309-residue polypeptide: Calponin-2 (309 aa).

Ser-2 is subject to N-acetylserine. 2 positions are modified to N6-acetyllysine: Lys-8 and Lys-25. A Calponin-homology (CH) domain is found at 28 to 132 (PQKEAELRTW…SLLALAGKAK (105 aa)). Ser-138 is modified (phosphoserine). Calponin-like repeat units lie at residues 166-191 (IGLQ…RHLY), 206-231 (ISLQ…RHIY), and 245-269 (MSLQ…RQIY). The interval 283–309 (APSGTGDCPDPGEVPEYPPYYQEEAGY) is disordered.

The protein belongs to the calponin family. In terms of tissue distribution, heart and smooth muscle.

In terms of biological role, thin filament-associated protein that is implicated in the regulation and modulation of smooth muscle contraction. It is capable of binding to actin, calmodulin and tropomyosin. The interaction of calponin with actin inhibits the actomyosin Mg-ATPase activity. The sequence is that of Calponin-2 (CNN2) from Homo sapiens (Human).